Here is a 267-residue protein sequence, read N- to C-terminus: Phosphatidylserine decarboxylase proenzyme (267 aa).

Active-site charge relay system; for autoendoproteolytic cleavage activity residues include Asp78, His132, and Ser236. Ser236 (schiff-base intermediate with substrate; via pyruvic acid; for decarboxylase activity) is an active-site residue. Ser236 is modified (pyruvic acid (Ser); by autocatalysis).

This sequence belongs to the phosphatidylserine decarboxylase family. PSD-B subfamily. Prokaryotic type I sub-subfamily. Heterodimer of a large membrane-associated beta subunit and a small pyruvoyl-containing alpha subunit. Pyruvate serves as cofactor. In terms of processing, is synthesized initially as an inactive proenzyme. Formation of the active enzyme involves a self-maturation process in which the active site pyruvoyl group is generated from an internal serine residue via an autocatalytic post-translational modification. Two non-identical subunits are generated from the proenzyme in this reaction, and the pyruvate is formed at the N-terminus of the alpha chain, which is derived from the carboxyl end of the proenzyme. The autoendoproteolytic cleavage occurs by a canonical serine protease mechanism, in which the side chain hydroxyl group of the serine supplies its oxygen atom to form the C-terminus of the beta chain, while the remainder of the serine residue undergoes an oxidative deamination to produce ammonia and the pyruvoyl prosthetic group on the alpha chain. During this reaction, the Ser that is part of the protease active site of the proenzyme becomes the pyruvoyl prosthetic group, which constitutes an essential element of the active site of the mature decarboxylase.

The protein localises to the cell membrane. The catalysed reaction is a 1,2-diacyl-sn-glycero-3-phospho-L-serine + H(+) = a 1,2-diacyl-sn-glycero-3-phosphoethanolamine + CO2. Its pathway is phospholipid metabolism; phosphatidylethanolamine biosynthesis; phosphatidylethanolamine from CDP-diacylglycerol: step 2/2. Its function is as follows. Catalyzes the formation of phosphatidylethanolamine (PtdEtn) from phosphatidylserine (PtdSer). The chain is Phosphatidylserine decarboxylase proenzyme from Helicobacter pylori (strain J99 / ATCC 700824) (Campylobacter pylori J99).